The following is a 448-amino-acid chain: Tubulin beta chain (448 aa).

Residues glutamine 11, glutamate 69, serine 138, glycine 142, threonine 143, glycine 144, asparagine 204, and asparagine 226 each contribute to the GTP site. Position 69 (glutamate 69) interacts with Mg(2+). The interval 425 to 448 (YQDASISEGEEEYLEEEEPLEHEE) is disordered. The segment covering 432-448 (EGEEEYLEEEEPLEHEE) has biased composition (acidic residues).

It belongs to the tubulin family. As to quaternary structure, dimer of alpha and beta chains. A typical microtubule is a hollow water-filled tube with an outer diameter of 25 nm and an inner diameter of 15 nM. Alpha-beta heterodimers associate head-to-tail to form protofilaments running lengthwise along the microtubule wall with the beta-tubulin subunit facing the microtubule plus end conferring a structural polarity. Microtubules usually have 13 protofilaments but different protofilament numbers can be found in some organisms and specialized cells. Mg(2+) serves as cofactor.

The protein localises to the cytoplasm. It is found in the cytoskeleton. Its function is as follows. Tubulin is the major constituent of microtubules, a cylinder consisting of laterally associated linear protofilaments composed of alpha- and beta-tubulin heterodimers. Microtubules grow by the addition of GTP-tubulin dimers to the microtubule end, where a stabilizing cap forms. Below the cap, tubulin dimers are in GDP-bound state, owing to GTPase activity of alpha-tubulin. The polypeptide is Tubulin beta chain (Aspergillus flavus).